The primary structure comprises 246 residues: Polyhedrin (246 aa).

It belongs to the polyhedrin family.

Major component of the virus occlusion bodies, which are large proteinaceous structures (polyhedra), that protect the virus from the outside environment for extended periods until they are ingested by insect larvae. This is Polyhedrin (PH) from Lepidoptera (butterflies and moths).